We begin with the raw amino-acid sequence, 245 residues long: Complement C1q subcomponent subunit A (245 aa).

Positions 1–22 are cleaved as a signal peptide; sequence METSQGWLVACVLTMTLVWTVA. The disordered stretch occupies residues 28 to 114; it reads APNGKDGAPG…NPGNIRDQPR (87 aa). In terms of domain architecture, Collagen-like spans 31-109; it reads GKDGAPGNPG…KGVKGNPGNI (79 aa). A 4-hydroxyproline mark is found at P39 and P45. A 5-hydroxylysine modification is found at K48. K48 is a glycosylation site (O-linked (Gal...) hydroxylysine; alternate). At P54 the chain carries 4-hydroxyproline. A 5-hydroxylysine modification is found at K67. K67 is a glycosylation site (O-linked (Gal...) hydroxylysine; alternate). 4-hydroxyproline is present on residues P79 and P85. Residues 79–99 are compositionally biased toward low complexity; the sequence is PGNVGLPGPSGPLGDSGPQGL. K100 is subject to 5-hydroxylysine. The O-linked (Gal...) hydroxylysine; alternate glycan is linked to K100. The C1q domain occupies 110–245; that stretch reads RDQPRPAFSA…FSGFLIFPSA (136 aa). An N-linked (GlcNAc...) asparagine glycan is attached at N146. Q199 lines the Ca(2+) pocket.

In terms of assembly, core component of the complement C1 complex, a calcium-dependent complex composed of 1 molecule of the C1Q subcomplex, 2 molecules of C1R and 2 molecules of C1S. The C1Q subcomplex is composed 18 subunits: 3 chains of C1QA, C1QB, and C1QC trimerize to form 6 collagen-like triple helices connected to six globular ligand-recognition modules (C1q domain). Interacts with CR1 (via Sushi 24 and Sushi 25 domains). Interacts (via C-terminus) with CD33; this interaction activates CD33 inhibitory motifs. Post-translationally, O-linked glycans are assumed to be the Glc-Gal disaccharides typically found as secondary modifications of hydroxylated lysines in collagen-like domains.

It localises to the secreted. It is found in the cell surface. With respect to regulation, the C1Q subcomplex is inhibited by sulfated molecules, such as triterpenoid sulfates, heparan sulfate, or chondroitin sulfates. In terms of biological role, core component of the complement C1 complex, a multiprotein complex that initiates the classical pathway of the complement system, a cascade of proteins that leads to phagocytosis and breakdown of pathogens and signaling that strengthens the adaptive immune system. The classical complement pathway is initiated by the C1Q subcomplex of the C1 complex, which specifically binds IgG or IgM immunoglobulins complexed with antigens, forming antigen-antibody complexes on the surface of pathogens: C1QA, together with C1QB and C1QC, specifically recognizes and binds the Fc regions of IgG or IgM via its C1q domain. Immunoglobulin-binding activates the proenzyme C1R, which cleaves C1S, initiating the proteolytic cascade of the complement system. The C1Q subcomplex is activated by a hexamer of IgG complexed with antigens, while it is activated by a pentameric IgM. The C1Q subcomplex also recognizes and binds phosphatidylserine exposed on the surface of cells undergoing programmed cell death, possibly promoting activation of the complement system. In Mus musculus (Mouse), this protein is Complement C1q subcomponent subunit A.